Here is a 176-residue protein sequence, read N- to C-terminus: GKAKPRLEIEGYPVEGISIGGHETCVIFPTLSLAFDIGRCPQRAVAQDFLFISHAHLDHIGGLPMYVATRGLYRLRPPTIFVPKYLRELVERLFDVHRAMDQSELNHTLVPLDIGEEYELRRDLKVRAFKTYHTIPSQGYVIYSVKQKLKQDYLGLPGSEIKRLKLSGVEITNTVT.

Belongs to the RNase Z family. As to quaternary structure, homodimer. It depends on Zn(2+) as a cofactor.

It localises to the nucleus. It catalyses the reaction Endonucleolytic cleavage of RNA, removing extra 3' nucleotides from tRNA precursor, generating 3' termini of tRNAs. A 3'-hydroxy group is left at the tRNA terminus and a 5'-phosphoryl group is left at the trailer molecule.. In terms of biological role, zinc phosphodiesterase, which displays some tRNA 3'-processing endonuclease activity. Probably involved in tRNA maturation, by removing a 3'-trailer from precursor tRNA. The polypeptide is Nuclear ribonuclease Z (ELAC) (Triticum aestivum (Wheat)).